The chain runs to 83 residues: Small ribosomal subunit protein eS21 (83 aa).

This sequence belongs to the eukaryotic ribosomal protein eS21 family. Component of the 40S small ribosomal subunit.

The protein resides in the cytoplasm. It is found in the cytosol. The protein localises to the rough endoplasmic reticulum. This chain is Small ribosomal subunit protein eS21 (RpS21), found in Agriotes lineatus (Lined click beetle).